The sequence spans 159 residues: 6,7-dimethyl-8-ribityllumazine synthase (159 aa).

5-amino-6-(D-ribitylamino)uracil is bound by residues F22, 57-59 (AVE), and 81-83 (AVI). A (2S)-2-hydroxy-3-oxobutyl phosphate-binding site is contributed by 86–87 (GT). Residue H89 is the Proton donor of the active site. F114 contributes to the 5-amino-6-(D-ribitylamino)uracil binding site. Residue R128 participates in (2S)-2-hydroxy-3-oxobutyl phosphate binding.

Belongs to the DMRL synthase family. As to quaternary structure, forms an icosahedral capsid composed of 60 subunits, arranged as a dodecamer of pentamers.

It carries out the reaction (2S)-2-hydroxy-3-oxobutyl phosphate + 5-amino-6-(D-ribitylamino)uracil = 6,7-dimethyl-8-(1-D-ribityl)lumazine + phosphate + 2 H2O + H(+). Its pathway is cofactor biosynthesis; riboflavin biosynthesis; riboflavin from 2-hydroxy-3-oxobutyl phosphate and 5-amino-6-(D-ribitylamino)uracil: step 1/2. Its function is as follows. Catalyzes the formation of 6,7-dimethyl-8-ribityllumazine by condensation of 5-amino-6-(D-ribitylamino)uracil with 3,4-dihydroxy-2-butanone 4-phosphate. This is the penultimate step in the biosynthesis of riboflavin. The polypeptide is 6,7-dimethyl-8-ribityllumazine synthase (Shewanella denitrificans (strain OS217 / ATCC BAA-1090 / DSM 15013)).